Here is a 549-residue protein sequence, read N- to C-terminus: CTP synthase (549 aa).

Residues 1-266 (MSAKYIFVTG…DKLALRYLHL (266 aa)) are amidoligase domain. CTP is bound at residue Ser-14. Ser-14 contributes to the UTP binding site. ATP is bound by residues 15 to 20 (SLGKGL) and Asp-72. Mg(2+) is bound by residues Asp-72 and Glu-140. Residues 147 to 149 (DIE), 187 to 192 (KTKPTQ), and Lys-223 contribute to the CTP site. UTP-binding positions include 187–192 (KTKPTQ) and Lys-223. An ATP-binding site is contributed by 239–241 (KDV). In terms of domain architecture, Glutamine amidotransferase type-1 spans 291-533 (SIGIVGKYVE…VKAAYQNHKP (243 aa)). Residue Gly-353 coordinates L-glutamine. The Nucleophile; for glutamine hydrolysis role is filled by Cys-380. Residues 381–384 (LGMQ), Glu-404, and Arg-461 contribute to the L-glutamine site. Active-site residues include His-506 and Glu-508.

This sequence belongs to the CTP synthase family. In terms of assembly, homotetramer.

The catalysed reaction is UTP + L-glutamine + ATP + H2O = CTP + L-glutamate + ADP + phosphate + 2 H(+). It carries out the reaction L-glutamine + H2O = L-glutamate + NH4(+). The enzyme catalyses UTP + NH4(+) + ATP = CTP + ADP + phosphate + 2 H(+). It participates in pyrimidine metabolism; CTP biosynthesis via de novo pathway; CTP from UDP: step 2/2. Its activity is regulated as follows. Allosterically activated by GTP, when glutamine is the substrate; GTP has no effect on the reaction when ammonia is the substrate. The allosteric effector GTP functions by stabilizing the protein conformation that binds the tetrahedral intermediate(s) formed during glutamine hydrolysis. Inhibited by the product CTP, via allosteric rather than competitive inhibition. Functionally, catalyzes the ATP-dependent amination of UTP to CTP with either L-glutamine or ammonia as the source of nitrogen. Regulates intracellular CTP levels through interactions with the four ribonucleotide triphosphates. The polypeptide is CTP synthase (Acidobacterium capsulatum (strain ATCC 51196 / DSM 11244 / BCRC 80197 / JCM 7670 / NBRC 15755 / NCIMB 13165 / 161)).